Here is a 375-residue protein sequence, read N- to C-terminus: Flagellin (375 aa).

Belongs to the bacterial flagellin family.

It is found in the secreted. Its subcellular location is the bacterial flagellum. Its function is as follows. Flagellin is the subunit protein which polymerizes to form the filaments of bacterial flagella. Flagella are an important component in the invasiveness of B.bacilliformis. In Bartonella bacilliformis, this protein is Flagellin.